The chain runs to 47 residues: Large ribosomal subunit protein bL33C (47 aa).

Belongs to the bacterial ribosomal protein bL33 family.

This is Large ribosomal subunit protein bL33C from Staphylococcus aureus (strain MRSA252).